The following is a 689-amino-acid chain: Methionine--tRNA ligase (689 aa).

Positions 15–25 (PYANGPIHLGH) match the 'HIGH' region motif. Residues Cys146, Cys149, Cys159, and Cys162 each contribute to the Zn(2+) site. Positions 332–336 (KMSKS) match the 'KMSKS' region motif. Lys335 contributes to the ATP binding site. The segment at 546 to 577 (KDNLQPTEAPKADKKADKKVEKKATTGDPLTD) is disordered. Residues 555-570 (PKADKKADKKVEKKAT) are compositionally biased toward basic and acidic residues. The 102-residue stretch at 588-689 (DFAKLDLRIA…QGAKPGMRVK (102 aa)) folds into the tRNA-binding domain.

It belongs to the class-I aminoacyl-tRNA synthetase family. MetG type 1 subfamily. In terms of assembly, homodimer. It depends on Zn(2+) as a cofactor.

Its subcellular location is the cytoplasm. It catalyses the reaction tRNA(Met) + L-methionine + ATP = L-methionyl-tRNA(Met) + AMP + diphosphate. Functionally, is required not only for elongation of protein synthesis but also for the initiation of all mRNA translation through initiator tRNA(fMet) aminoacylation. This is Methionine--tRNA ligase from Shewanella denitrificans (strain OS217 / ATCC BAA-1090 / DSM 15013).